Consider the following 349-residue polypeptide: Nicotinate-nucleotide--dimethylbenzimidazole phosphoribosyltransferase (349 aa).

E313 functions as the Proton acceptor in the catalytic mechanism.

The protein belongs to the CobT family.

It carries out the reaction 5,6-dimethylbenzimidazole + nicotinate beta-D-ribonucleotide = alpha-ribazole 5'-phosphate + nicotinate + H(+). It participates in nucleoside biosynthesis; alpha-ribazole biosynthesis; alpha-ribazole from 5,6-dimethylbenzimidazole: step 1/2. In terms of biological role, catalyzes the synthesis of alpha-ribazole-5'-phosphate from nicotinate mononucleotide (NAMN) and 5,6-dimethylbenzimidazole (DMB). This chain is Nicotinate-nucleotide--dimethylbenzimidazole phosphoribosyltransferase, found in Mycobacterium avium (strain 104).